Here is a 956-residue protein sequence, read N- to C-terminus: Chromatin assembly factor 1 subunit A (956 aa).

Residues 1-49 (MLEELECGAPGARGAATAMDCKDRPAFPVKKLIQARLPFKRLNLVPKGK) form a binds to PCNA region. The segment at 1-314 (MLEELECGAP…QHSSTSPFPT (314 aa)) is binds to CBX1 chromo shadow domain. 2 disordered regions span residues 45-65 (VPKGKADDMSDDQGTSVQSKS) and 122-155 (DSNEQPDSLVDHNKLNSEASPSREAINGQREDTG). Polar residues predominate over residues 56–65 (DQGTSVQSKS). 5 positions are modified to phosphoserine: serine 65, serine 123, serine 138, serine 141, and serine 143. Lysine 182 participates in a covalent cross-link: Glycyl lysine isopeptide (Lys-Gly) (interchain with G-Cter in SUMO1); alternate. Residue lysine 182 forms a Glycyl lysine isopeptide (Lys-Gly) (interchain with G-Cter in SUMO2); alternate linkage. Positions 188 to 222 (VGCGGAGRRGDSQECSPRSCPELTSGPRMCPRKEQ) are disordered. Residues serine 206 and serine 224 each carry the phosphoserine modification. The short motif at 233–246 (FKGKVPMVVLQDIL) is the PxVxL motif element. 2 disordered regions span residues 250–432 (PPQI…KRLR) and 599–639 (DSDE…VPHG). Composition is skewed to low complexity over residues 282 to 296 (LSHSSLSSPSSTSSP) and 307 to 317 (SSTSPFPTSTP). Serine 310 is modified (phosphoserine). Positions 329–432 (STEKNKLRLQ…RKKEEEKRLR (104 aa)) are enriched in basic and acidic residues. 2 stretches are compositionally biased toward acidic residues: residues 599-610 (DSDEEWEEEEPG) and 618-633 (GDDDDDMGEDEDEDDG). Residues 642–678 (SEDEGVTEECADPENHKVRQKLKAKEWDEFLAKGKRF) are necessary for homodimerization and competence for chromatin assembly. Residues 660–956 (RQKLKAKEWD…TLTASPLGAS (297 aa)) form a binds to p60 region. Threonine 722 is subject to Phosphothreonine. Residues 765–790 (LLSNHTGSPRSPSTTYLHTPTPSEDA) form a disordered region. Residues 767-786 (SNHTGSPRSPSTTYLHTPTP) are compositionally biased toward polar residues. Phosphoserine is present on residues serine 772, serine 775, and serine 803. 2 disordered regions span residues 844 to 873 (SVPSAPKEDSGSVPSTGPSQGTPISLKRKS) and 933 to 956 (SGAGGGVGVDTGKATLTASPLGAS). Polar residues predominate over residues 855–866 (SVPSTGPSQGTP). Threonine 865 is subject to Phosphothreonine. 3 positions are modified to phosphoserine: serine 868, serine 873, and serine 951.

The protein belongs to the CHAF1A family. In terms of assembly, homodimer. Part of the CAF-1 complex that contains RBBP4, CHAF1B and CHAF1A. CHAF1A binds directly to CHAF1B. Only minor amounts of RBBP4 are complexed with CHAF1A and CHAF1B in G1 phase. Interacts with PCNA; the interaction is direct. Interacts (via the PxVxL motif) with CBX5; the interaction is direct. Interacts with MBD1. Interacts with histones H3.1, H3.2 and H3.1t.

It localises to the nucleus. Its function is as follows. Acts as a component of the histone chaperone complex chromatin assembly factor 1 (CAF-1), which assembles histone octamers onto DNA during replication and repair. CAF-1 performs the first step of the nucleosome assembly process, bringing newly synthesized histones H3 and H4 to replicating DNA; histones H2A/H2B can bind to this chromatin precursor subsequent to DNA replication to complete the histone octamer. It may play a role in heterochromatin maintenance in proliferating cells by bringing newly synthesized cbx proteins to heterochromatic DNA replication foci. This is Chromatin assembly factor 1 subunit A from Homo sapiens (Human).